A 1162-amino-acid chain; its full sequence is Lysine-specific demethylase 2A (1162 aa).

S28 bears the Phosphoserine mark. In terms of domain architecture, JmjC spans 148-316; that stretch reads FSHTRLENMV…MQLKIYNIED (169 aa). T209 lines the substrate pocket. Fe cation contacts are provided by H212 and D214. Substrate is bound at residue K229. H284 contacts Fe cation. The tract at residues 367 to 389 is disordered; the sequence is GLESGNGDEEAVDREPRRLSSRR. S390 and S394 each carry phosphoserine. K505 participates in a covalent cross-link: Glycyl lysine isopeptide (Lys-Gly) (interchain with G-Cter in SUMO2). A disordered region spans residues 532–557; the sequence is VPTIPITKPHTMKPAPRLTPVRPAAA. T550 carries the post-translational modification Phosphothreonine. Phosphoserine is present on S558. A CXXC-type zinc finger spans residues 564 to 610; it reads ARRRRVRCRKCKACVQGECGVCHYCRDMKKFGGPGRMKQSCVLRQCL. Zn(2+) is bound by residues C571, C574, C577, C582, C585, C588, C604, C609, C620, and C623. The PHD-type zinc finger occupies 617 to 678; the sequence is SVTCSLCGEV…CWECPKCYQE (62 aa). Position 632 is a phosphothreonine (T632). Zn(2+) contacts are provided by C642, C645, H650, C653, C672, and C675. S692 bears the Phosphoserine mark. Residues 704–789 are disordered; sequence PLRSCDEPLT…PSGKKELSEV (86 aa). The residue at position 713 (T713) is a Phosphothreonine. Phosphoserine occurs at positions 718 and 731. Composition is skewed to basic and acidic residues over residues 746–757 and 771–789; these read SDHHSASRDERF and TMVREKENNPSGKKELSEV. 4 positions are modified to phosphoserine: S825, S832, S869, and S883. Positions 839–887 are disordered; it reads HCPARTPQRGDEEGLGGEEEEEEEEEEEDDSAEEGGAARLNGRGSWAQD. A compositionally biased stretch (acidic residues) spans 851–871; that stretch reads EGLGGEEEEEEEEEEEDDSAE. The F-box domain occupies 889 to 936; the sequence is DESWMQREVWMSVFRYLSRRELCECMRVCKTWYKWCCDKRLWTKIDLS. 2 LRR repeats span residues 961-982 and 984-1010; these read WTNISKKQLTWLVNRLPGLKDL and LAGCSWSAVSALSTSSCPLLRTLDLRW. R1020 carries the ADP-ribosylarginine modification. LRR repeat units follow at residues 1048-1073, 1074-1103, 1104-1128, and 1129-1156; these read GLDITDATLRLIIRHMPLLSRLDLSH, CSHLTDQSSNLLTAVGSSTRYSLTELNMAG, CNKLTDQTLIYLRRIANVTLIDLRG, and CKQITRKACEHFISDLSINSLYCLSDEK.

The protein belongs to the JHDM1 histone demethylase family. As to quaternary structure, interacts with CBX5/HP1A; the interaction promotes CBX5 localization to chromatin. The SKP1-KDM2A complex interacts with UBB. Part of a SCF (SKP1-cullin-F-box) protein ligase complex. The cofactor is Fe(2+). In terms of processing, mono-ADP-ribosylated at Arg-1020 in response to DNA damage, leading to displacement from chromatin, resulting in increased dimethylation of histone H3 at 'Lys-36'. As to expression, widely expressed, with highest levels in brain, testis and ovary, followed by lung.

The protein localises to the nucleus. It is found in the nucleoplasm. The protein resides in the chromosome. It catalyses the reaction N(6),N(6)-dimethyl-L-lysyl(36)-[histone H3] + 2 2-oxoglutarate + 2 O2 = L-lysyl(36)-[histone H3] + 2 formaldehyde + 2 succinate + 2 CO2. Its function is as follows. Histone demethylase that specifically demethylates 'Lys-36' of histone H3, thereby playing a central role in histone code. Preferentially demethylates dimethylated H3 'Lys-36' residue while it has weak or no activity for mono- and tri-methylated H3 'Lys-36'. May also recognize and bind to some phosphorylated proteins and promote their ubiquitination and degradation. Required to maintain the heterochromatic state. Associates with centromeres and represses transcription of small non-coding RNAs that are encoded by the clusters of satellite repeats at the centromere. Required to sustain centromeric integrity and genomic stability, particularly during mitosis. Regulates circadian gene expression by repressing the transcriptional activator activity of CLOCK-BMAL1 heterodimer and RORA in a catalytically-independent manner. The protein is Lysine-specific demethylase 2A (KDM2A) of Homo sapiens (Human).